Here is a 243-residue protein sequence, read N- to C-terminus: Asnovolin H synthase nvfL (243 aa).

7 helical membrane passes run Ala-20–Ser-42, Ala-51–Pro-71, Phe-75–Ile-95, Leu-112–Ala-132, Ile-138–Leu-160, Ser-169–Ile-189, and Leu-205–Tyr-225.

Belongs to the paxB family.

The protein localises to the membrane. It catalyses the reaction (3R)-[(10S)-11-epoxyfarnesyl]-2,3,5-trimethyl-6-oxido-4-oxocyclohexa-1,5-diene-1-carboxylate + H(+) = asnovolin H. The protein operates within secondary metabolite biosynthesis; terpenoid biosynthesis. Its function is as follows. Terpene cyclase; part of the gene cluster that mediates the biosynthesis of novofumigatonin, a heavily oxygenated meroterpenoid containing a unique orthoester moiety. The first step of the pathway is the synthesis of 3,5-dimethylorsellinic acid (DMOA) by the polyketide synthase nvfA via condensation of one acetyl-CoA starter unit with 3 malonyl-CoA units and 2 methylations. DMOA is then converted to farnesyl-DMOA by the farnesyltransferase nvfB. Epoxydation by FAD-dependent monooxygenase nvfK, followed by a protonation-initiated cyclization catalyzed by the terpene cyclase nvfL leads to the production of asnavolin H. The short chain dehydrogenase nvfC then as a 3-OH dehydrogenase of asnovolin H to yield chemesin D. There are two branches to synthesize asnovolin A from chemesin D. In one branch, chemesin D undergoes Baeyer-Villiger oxidation by nvfH, methylation by nvfJ, and enoyl reduction by the nvfM D enoylreductase that reduces the double bond between C-5'and C-6', to form respectively asnovolin I, asnovolin K, and asnovolin A. In the other branch, the methylation precedes the Baeyer-Villiger oxidation and the enoyl reduction to yield asnovolin A via the asnovolin J intermediate. Asnovolin A is further converted to fumigatonoid A by the Fe(II)/2-oxoglutarate-dependent dioxygenase nvfI that catalyzes an endoperoxidation reaction. The alpha/beta hydrolase nvfD then acts as an epimerase that converts fumigatonoid A to its C-5' epimer, which then undergoes spontaneous or nvfD-catalyzed lactonization. The following step utilizes the ketoreductase nvfG to produce fumigatonoid B. The dioxygenase nvfE further converts fumigatonoid B into fumigatonoid C. Finally the Fe(II)/2-oxoglutarate-dependent dioxygenase nvfF catalyzes two rounds of oxidation to transform fumigatonoid C into the end product, novofumigatonin A. The sequence is that of Asnovolin H synthase nvfL from Aspergillus novofumigatus (strain IBT 16806).